The primary structure comprises 401 residues: uncharacterized protein (401 aa).

This sequence belongs to the herpesviridae BTRF1 family.

This is an uncharacterized protein from Connochaetes taurinus (Blue wildebeest).